We begin with the raw amino-acid sequence, 206 residues long: Molybdopterin synthase catalytic subunit (206 aa).

Polar residues predominate over residues 1–23; sequence MATQQPTQTDNSAQAQPPQTNPA. The interval 1–27 is disordered; it reads MATQQPTQTDNSAQAQPPQTNPAKPTE. Substrate is bound by residues 131–132, lysine 147, and 154–156; these read HR and KRE. Residues 177–188 are compositionally biased toward basic and acidic residues; it reads KVDEPRIGKGEV. The interval 177 to 206 is disordered; the sequence is KVDEPRIGKGEVDEKEDEGDSGNGGNDRKS. The span at 197-206 shows a compositional bias: gly residues; the sequence is SGNGGNDRKS.

This sequence belongs to the MoaE family. MOCS2B subfamily. In terms of assembly, heterotetramer; composed of 2 small (MOCS2A) and 2 large (MOCS2B) subunits.

The protein resides in the cytoplasm. The catalysed reaction is 2 [molybdopterin-synthase sulfur-carrier protein]-C-terminal-Gly-aminoethanethioate + cyclic pyranopterin phosphate + H2O = molybdopterin + 2 [molybdopterin-synthase sulfur-carrier protein]-C-terminal Gly-Gly + 2 H(+). It participates in cofactor biosynthesis; molybdopterin biosynthesis. Functionally, catalytic subunit of the molybdopterin synthase complex, a complex that catalyzes the conversion of precursor Z into molybdopterin. Acts by mediating the incorporation of 2 sulfur atoms from thiocarboxylated MOCS2A into precursor Z to generate a dithiolene group. This is Molybdopterin synthase catalytic subunit (nit-8) from Neurospora crassa (strain ATCC 24698 / 74-OR23-1A / CBS 708.71 / DSM 1257 / FGSC 987).